The sequence spans 4923 residues: MDKGNNSLPTYDEIDEYLSRRNSTFVWLLVATIMSCGWIIYLTYYNSRNIGLVLTLIINRLYKNGYIHIGSFSFSVLSGKVMFRDVYFINKDMSIRIQDGLLIFRWWKMYNPKQKQHDPKAETRLYVTVNGFEFHVYNRTDLYTRLQEIFGLEPTLIQSNRDEEKGREQRDKSLESVHIKAETQDPSSSWRSLIPVIKVNISTGRVAFGNHHLPQTLCMNFDDAFLTYATKPPSSHLDQFMHIVKGSLENVRVMLVPSPRYLGLQNDEPPRLMGEGFVVMQSNDVDIYYYQDEPGLVPEELENGDTEACSEDAKLQDLPPCWGLDIVCGKGTDFNYGPWADRQRDSLWKFFLPADYQPMKVSEVPTPGKPRQILAFELRMNIIADATIDLLFTKNRETNAVHVNVGAGSYLEVNIPMTVGENGYSPTVKGQLLHVDTTSSMQYRTLLEAEMLAFHVIASYPRVWNMPQSWQCEIEVYKATYHFIYAQKNFFTDLIQDWASDSEPDIYSFVPYSWKFKILFHQFEMIWAANQHNWIDCSTKQQENVYLAACGETLNIDFTLPFHEFVPVTCNTRFCLRAEDTDMRLCLPDCHPSRYPLLTLAKDYQHSKSPPDNNMPAEGQGAPPKNSKPRWRNMTHAEAGWVDCWSVPNFMLIIDYTWHPIYPQKSEQQLKQSLSEIEESMLSALRPPELAPPVPPPPRVSSDPSLLPPDRLHVEMELSPGSHITLYGPLLRALVSIKENYFGEDDMYTDFEESLSSPVLSTCSSSSCWTGVGLEDKSSKEAPHPLTLRPWDITVFINLHKVHGRLPTHCSSDGPEGPTGFMERLCFEMKKGYKETMLQLVLSPVHVFVSDNYQRPPIDAVLRDGHLSLSGLQMRAHAMFSAEGLPAGSDTLEYAWLIDVQAGALTGRVSVPQCASLLEWGESFVFHVMSREFQLEQPKPSVTCQHGVDRRICDAKHAGLPGHCRTSEDLKYTMTRLTVDGAHIFVVEHGCAANIKTGALRVATCNLHTAAVGEGISAVLQDVVIAQFIEQQEVARLGLPPPLLRRSHWLEAGSVTFNLITADVALAADHSAKYEVQRQFLELHDMKTKRLWFLWPEEKYKRSRNRCGCLGGCRFFGGTIGGLDFFRLEEITPSSSSAFSGISAECDMSYGQSLLHPGEWIVTKETPKIPDVIYAAKGIAVRRDTCSPAPVVDLERRVQQHLSLHVPQRSHSSASSSEENSSSSAALPLLAGERESPSPSTELMNVTTDCPIPEGPPLRSPLRSPLKRQSSVQSARLGSTKSLSAAVFVEKALPPAGVQFSSEVSRSDENVLDSPRQRRSYGSFPFTPSADSSTFHQYRSVDSSMSVADSEAYFSATEEFEPISSDEGPGTYPGRKRRRRQQGQPHTEHSRTSIYHSVEGPLSINEIRPPLLPSHTSQASFVSALGLEEEGSIETEKADPGILTTQPHLMACYQNYLAHYHVSNWAVKQPTNKRTSKSSLHRPLDLDTPTSEESSTCFDQLSIPTFKMVKAGLSASSLLDRGVQLMGDINSTPYTPLDKRAMDNTDEDTVTEDWTVDQPLAQTRTTAIVEVKGAVNVVLTPLVVEALDRYIESMVHFASFRHPASILDDLHGKVLNEVYQISKSTVSESSAAKQEHKISKTEGTTPGSLSTPHGQTDLSIKPDNVKIKGLQANVTVPKVNLCVLQASVEESSPSNKSITHVSLVALCFDRIATQLRMNRGIVEDTEKPSVMMEKFSSASKMAPQSSGSLRSNAGIEKGKEIAARLNIHRIHSQLRGLDSSDIGACAITAIPFEKSKVLFSLEEIDDFVLVDETEPSISTEHMPEHNPDHSRLGTSPEKWGWIMFECGIENLTVKGGRQSGAVLYSAFGVMGGADSGVRDGVSKSNDSSGSQTGSGYSTDVSDDNLPNDAQSPASEPNNNSDSDEQDEGVESDDLKKDLPLLPPPPDSSSMKLTIKEIWFSFAAPTNIRSHAPVMSRQLNLLSTATPAVGAWLVPIDQLKSSLEKLDMEATLRVCAVMGCIMTEALEKKSIHIPFRSKYNRVTKRARYLHENPSCLLCNILHRYLQQADYTIIEEATMNDGLPALVTLRKGLVALARQWMKFIVVTQGFKAVGLPQQLPKPKEQEPVEPEQTPGLDCGGALQSDTSADGAEFEFDAGTVSEHTMLLEGVCSRPAPTGNSAPVTGVEIMRKLSKSHTHSESALRIKGSHPYQSLSYTSGDTAADSPAHVSRTGLQCNHSPRKESLLSYLTGSIHSLHNLLEATPHRANEQTATKSSSLTRTGNSVGADVLTEHPLLSEPFSVSFYNWMSNAVGNRTGGNVQDSPLNRSQHNSLQTGGVLPTIPSASDFNTVLSSDQNTLDTHSQHSHSQHSTSQEDLLDQDETNLCPAAVQLADAQVVFKPLLSHIGIQPQDAPPLSYKMYFGEHLSFSGTLECLRADIVDSDTSKERKNKRAHRQGMVNLPPLDFKPALMIETFSLNAVVLEKCMSTPPSASALSFHELSRRPQASVHCHFTVACQAIRQHVDMALVRLIHQFSTMIDDIKATQTDIKLNRYTAGSSSPTPTKGRPYREFRSSDFSRSSRGSLNGAARLGTQKGKRGMVGPGLDTLTRSREPRGRGTLGRSERRTSKVSRKGSRDVADHMTIQMDDSDSITVSEQSEPSAECWQNMYKLLNFYSLISDPTGILEKNQDNALSEGGRSPADPPCRVVFESEEETPPSRLGRRRSLVSAEPQHVTLIVFGVGMVNRTHLEADIGGLTMEAELKKIHGSFTLKEKMKDILHQKMTETCASAHIGCVNIVLLEGISPDIQLEDFPTSPTSTAKQEFLTVVKCNIAKSQALYSAQRGLKTNNAAIFKVGAIFINIPQHPATLHSMMVRSSHQLSKQISDLIRQPSNTPPPNREDTPTPQPSEVSINQTPVEANEFPQLPEGLEKKPIVLKFSAMLDGITIGAALLPSLKAEYKMGRMKSHGMTGAQTRFTFELPNHKLCFQSKVSPVDVSAMPPTASLTLPPVTMSGQYIIQEHEGHSDTAWAPEYSSYLQGNYLRCVAEIGSFEHNLTTDLLNHLVFLQKVFMKEVNEVIQKVSGGEQPIPLWNEHDVSTDGDKPKILLYSINLTFKGIQMTATTPSMRAVRFETGWIELELSNRVQCKTTPTGSNYLKLFGKCQVDLNLALGQIVKHQVYEEAGSDFHQVAYFRTRIGLRNALQEEISGSSDKEAVLITLSRPIIFAQPVAFDRAVLFWLNYKAAYDNWKEQRLALNSDIHMATKEVVDKLPAIQQTSVQAFSTLFLQLTVNDLGICLPITSATQANYSIDFDTGSALVLTIESTLITACSSESLVSKGHFKNFCIRFAEGFETTWDDWKPEIRGDLVMNACVVPDGTYEVCSRTTGQASAESSSAGTWTLNVLWKMCGIDVHMDPNIGKRLNALGNTLTSLTGEEDNDDITDLNSVNMADLSDEDESDGMSPPVHMESVDLRRQAVMSNQIIDARGRKFSKRLVDIRELNEQAKVIDDLKKLGASEGTINQEIQRYQQLESVAVNDIRRDVRKKLRRSSMRAASLKDKWGLGYKPSYSNSRSKSISAAGRPPMKRSDRPREDLPDIKVEAASPAPRVTFNIDMFPEETEMELLSVTIDDAAHYPSCSVFSAPGTPAVFSPTVPFQPDDSRRDDLSSTSSEDTDKEDDFDRDRPQSYYRRPGGSQRKSALSALFSERWPATPPQRGGLAPPTERNIDFELDVRVEIDSGKCVLHPSTQPTEHEDLALRRSCERSSRSLDQDSPPKKRKVQPSFPSSSHLLSAKRVPTSLQSKSSDIETTVFYIPGVDVKLHYNSKTLKTESPNASRGSSLPRTLSKESKLYGMRDAPTPAPAPAASGPGKTNTLLSPPPPPLPSAKGKAGVGVKTAKLYAWVALQTLPEEMVISPCLLDFLEKALETIPITPVDRNYTTLNVHEEDVGHFDSVEPLEESQVSLVSSATSPYSSFPVDVVVYVRVQPSQIRFSCLPMSRVECMLKLPSLDLVFSSNRGELEPTSATYPSEGQHTPSSTPPSVHNANRVPGGPSTGLGSPLGRSRHHSSQSDLTGPPINSSGLSFTACMSDFSLYVFHPYGAGKQKSAVTGLPPGPGPLGSVEDEASSVTGRKDSLSINLEFVKVSLSRMRRTGCPAFIDTFIASKGGKMDTTLINISAVCDIGSASFKYDMRRLSEILAFPRAWYRRSIARRLFLGDQTINLPASGPATPDSVESIAQHLSPESSRKAYWRTWDGQTTQHPSSSVFTDTTPSHSHLKSPATGRTRSVSDSSAPRRDSVTKTSTPSFRNGKAAAQQGSPWETLVVFAINLKQLNVQMNMSNVMGNNTWTTSGLKSQGRLSVGSNRDREISMSIGLGRSKLDSKGGVVGGNIDVNTLEMVSHISEHPNQQPSHKIQITMGSTEARLDYMGSSILMGIFSNADLQLQDEWKVNLCTAEASLSEKSEIFVHGDLQWDIFQVIISRSTTPDLIKIGMKLQEFFTQQFDTSKRALSTWGPVPYMPPKTPVINTDKASAELYMDAAHHRHWPNVLKMVAGCHISLFQMPLPEDAVQLGGSMSLHGNHMTLACFHGPNFRSKSWVLFHLEEPNIAFWTEAQKIWEDGCSDDSTYIVQTLDFHLGHNTMVTKPCGALESPMATITKVTRRRHENPPHGVATVKEWFNYVTAMRNEELNLLRNVDANNSESGAAAKSSSLLSGFRGSSSYNHETETIFALPKMQLQFKSIHVQDPEEPSLSDANSKPKVECSVVTEFTDHICVTMDAELIMFLHDLVSAYLKEKEKALFAPRMFASRPGQKSPTTQQDEPSSDKKEEREKEEGVNYTTVDWREFLCNTWHLEPTLRLISWTGRKIDPVGVDYILQKLGFHHARTTIPKWLQRGVMDPLDKVLSVLIKKLGTALQDEREKKGQRDKDEH.

A helical transmembrane segment spans residues 25 to 45 (FVWLLVATIMSCGWIIYLTYY). Disordered regions lie at residues 160 to 179 (NRDE…SVHI), 606 to 631 (HSKS…KPRW), 1203 to 1277 (SLHV…SARL), 1300 to 1334 (FSSE…DSST), 1357 to 1400 (TEEF…SVEG), 1471 to 1494 (TNKR…SEES), 1630 to 1660 (SAAK…DLSI), 1878 to 1948 (RDGV…PDSS), 2191 to 2235 (SKSH…LQCN), 2262 to 2281 (PHRA…RTGN), 2355 to 2375 (NTLD…QEDL), 2550 to 2655 (RYTA…SEQS), 2885 to 2910 (IRQP…VSIN), 3564 to 3596 (YSNS…IKVE), 3645 to 3695 (FSPT…RKSA), 3739 to 3797 (LHPS…SLQS), 3848 to 3884 (GMRD…AKGK), 4017 to 4071 (PTSA…TGPP), 4102 to 4124 (AVTG…SSVT), 4249 to 4309 (DGQT…AAAQ), and 4797 to 4827 (RMFA…EKEE). Residues 1210–1226 (SHSSASSSEENSSSSAA) are compositionally biased toward low complexity. Residues 1237–1248 (PSPSTELMNVTT) are compositionally biased toward polar residues. Residues 1260-1271 (SPLRSPLKRQSS) show a composition bias toward low complexity. Over residues 1641-1658 (TEGTTPGSLSTPHGQTDL) the composition is skewed to polar residues. The span at 1887-1898 (SSGSQTGSGYST) shows a compositional bias: low complexity. Positions 1907–1920 (NDAQSPASEPNNNS) are enriched in polar residues. A compositionally biased stretch (acidic residues) spans 1921-1931 (DSDEQDEGVES). Polar residues-rich tracts occupy residues 2208–2218 (PYQSLSYTSGD) and 2267–2281 (EQTA…RTGN). Residues 2550-2560 (RYTAGSSSPTP) are compositionally biased toward polar residues. The span at 2606–2624 (TRSREPRGRGTLGRSERRT) shows a compositional bias: basic and acidic residues. Residues 3581–3595 (KRSDRPREDLPDIKV) are compositionally biased toward basic and acidic residues. Positions 3746–3770 (TEHEDLALRRSCERSSRSLDQDSPP) are enriched in basic and acidic residues. Positions 4017–4039 (PTSATYPSEGQHTPSSTPPSVHN) are enriched in polar residues. Residues 4044 to 4056 (PGGPSTGLGSPLG) show a composition bias toward low complexity. 3 stretches are compositionally biased toward polar residues: residues 4249 to 4268 (DGQT…TPSH), 4276 to 4286 (TGRTRSVSDSS), and 4804 to 4814 (GQKSPTTQQDE). Over residues 4816–4827 (SSDKKEEREKEE) the composition is skewed to basic and acidic residues.

Its subcellular location is the cell membrane. The protein resides in the endoplasmic reticulum membrane. It localises to the mitochondrion membrane. Tube-forming lipid transport protein which provides phosphatidylethanolamine for glycosylphosphatidylinositol (GPI) anchor synthesis in the endoplasmic reticulum. Plays a role in endosomal trafficking and endosome recycling. Also involved in the actin cytoskeleton and cilia structural dynamics. Acts as a regulator of phagocytosis. This chain is Bridge-like lipid transfer protein family member 1 (bltp1), found in Danio rerio (Zebrafish).